The sequence spans 380 residues: Shaggy-related protein kinase eta (380 aa).

Residues 40 to 324 enclose the Protein kinase domain; that stretch reads YMAERVVGTG…ALEACAHPFF (285 aa). ATP-binding positions include 46–54 and Lys69; that span reads VGTGSFGIV. Thr104 bears the Phosphothreonine mark. At Ser105 the chain carries Phosphoserine. Asp165 (proton acceptor) is an active-site residue. Ser187 is modified (phosphoserine). A Phosphotyrosine modification is found at Tyr200. Phosphothreonine is present on residues Thr220 and Thr261. Ser310 is subject to Phosphoserine. Thr314 bears the Phosphothreonine mark. At Ser353 the chain carries Phosphoserine.

Belongs to the protein kinase superfamily. CMGC Ser/Thr protein kinase family. GSK-3 subfamily. In terms of assembly, interacts in vitro with the C-terminal fragment of BZR1 and with BES1/BZR2, but not through the kinase domain. Interacts with BHLH150, beet curly top virus AL4/C4 and tomato golden mosaic virus AL4/AC4. Interacts with YDA. Interacts with MKK4. Interacts with KIB1 and KIB2 in a brassinosteroid (BR)-dependent manner. Interacts with BSK1, BSK6, BSK8 and BSK11. Binds to WRKY46, WRKY54 and WRKY70. Component of a complex made of POLAR, BASL, ASK7/BIN2 and ASK3/SK12. Binds to POLAR and BASL. Autophosphorylated mainly on threonine and serine residues. In terms of processing, ubiquitination and subsequent proteasomal degradation mediated by KIB1. In the two outer cell layers of the developing seed coat and restricted to the suspensor cells in developing embryos. Mostly expressed in stomatal lineage cells with asymmetric cell division (ACD) potential. Observed in small cells of non-protruding hypocotyl cell files and of developing cotyledon epidermis.

The protein localises to the cytoplasm. Its subcellular location is the cell cortex. It is found in the nucleus. It localises to the cell membrane. It catalyses the reaction L-seryl-[protein] + ATP = O-phospho-L-seryl-[protein] + ADP + H(+). The enzyme catalyses L-threonyl-[protein] + ATP = O-phospho-L-threonyl-[protein] + ADP + H(+). With respect to regulation, inactivated by an unknown mechanism after binding of brassinosteroids to the brassinosteroid receptor complex. Inhibited by lithium. Inhibited by dephosphorylation at Tyr-200 by BSU1. Competitive inhibition by KIB1 that reduces substrate (e.g. BZR1) access. Repressed by bikinin. Its function is as follows. Negative regulator in brassinosteroid signal transduction pathway important for plant growth. May be also involved in auxin signaling pathway. Phosphorylates and increases the degradation of BZR1 and BZR2/BES1 by the proteasome. Phosphorylates BHLH150, beet curly top virus C4 and tomato golden mosaic virus AC4 on threonine and serine residues. Upon brassinosteroid signaling, inhibits stomatal development by phosphorylating and inhibiting the MAPKK kinase YDA and the MAPK kinases MKK4 and MKK5. Phosphorylates BSK1, BSK3, BSK5, BSK6, BSK8 and BSK11 in vitro. Phoyphorylates and destabilizes WRKY46, WRKY54 and WRKY70. Mediates BASL nuclear exclusion; kinase activity is required for this function. Required first at the cortical polarity site, to restrict MAPK signaling and promote asymmetric cell division (ACD), and second in the nucleus of stomatal lineage ground cells (SLGCs) or meristemoids, to limit cell division and to promote differentiation into pavement or stomatal guard cells, respectively, likely by initiating BASL polarization. Phosphorylates BASL, YDA and SPCH in vitro and POLAR in vivo. Phosphorylates and inhibits SPCH in the nucleus of SLGC undergoing ACD, thus negatively regulating stomatal development. This is Shaggy-related protein kinase eta from Arabidopsis thaliana (Mouse-ear cress).